A 95-amino-acid chain; its full sequence is Secretoglobin family 2A member 2 (95 aa).

Positions 1–18 (MKLVFLFLLVTIPICCYA) are cleaved as a signal peptide. Residue Asn-35 is glycosylated (N-linked (GlcNAc...) asparagine).

It belongs to the secretoglobin family. Lipophilin subfamily. Prostatein is composed of three different peptides called C1, C2 and C3. These form covalent C1:C3 (F) and C2:C3 (S) heterodimers whose non-covalent association forms tetrameric (C1:C3/C3:C2) prostatein molecules. As to expression, highly expressed in ventral prostate.

The protein resides in the secreted. Functionally, part of prostatein which is the major secretory glycoprotein of ventral prostate gland. Steroid-binding protein; can bind non-polar steroids, cholesterol and a group of small proline-rich peptides. In Rattus norvegicus (Rat), this protein is Secretoglobin family 2A member 2 (Scgb2a2).